The sequence spans 122 residues: LYR motif-containing protein 1 (122 aa).

This sequence belongs to the complex I LYR family.

The protein is LYR motif-containing protein 1 (lyrm1) of Xenopus laevis (African clawed frog).